The primary structure comprises 198 residues: V-type ATP synthase subunit E (198 aa).

Belongs to the V-ATPase E subunit family.

In terms of biological role, produces ATP from ADP in the presence of a proton gradient across the membrane. The chain is V-type ATP synthase subunit E from Acetivibrio thermocellus (strain ATCC 27405 / DSM 1237 / JCM 9322 / NBRC 103400 / NCIMB 10682 / NRRL B-4536 / VPI 7372) (Clostridium thermocellum).